A 488-amino-acid polypeptide reads, in one-letter code: Monothiol glutaredoxin-S17 (488 aa).

The Thioredoxin domain occupies 2–107 (SGTVKDIVSK…LANKVGKVAG (106 aa)). 3 Glutaredoxin domains span residues 154–256 (KSRL…GITT), 284–386 (RARL…GITG), and 391–488 (EDRL…TLSE). Lysine 408 contributes to the glutathione binding site. Cysteine 416 is a [2Fe-2S] cluster binding site. Residues arginine 445, phenylalanine 457, and 470–471 (CD) contribute to the glutathione site.

This sequence belongs to the glutaredoxin family. CGFS subfamily. As to quaternary structure, [2Fe-2S]-bridged holo-homodimer. Interacts in vitro with SUFE1, BOLA1, BOLA2 and BOLA4. Interacts in vivo only with BOLA2. Interacts with RGLG3 and RGLG4. Post-translationally, ubiquitinated at Lys-154. Polyubiquitinated by RGLG3 and RGLG4. Polyubiquitination of GRXS17 leads to its degradation by the proteasome.

It localises to the cytoplasm. In terms of biological role, may only reduce GSH-thiol disulfides, but not protein disulfides. Participates probably to the maturation of iron-sulfur proteins and to the regulation of the redox state of the BOLA proteins. The GRXS17-BOLA2 heterodimer binds a labile, oxygen sensitive iron-sulfur cluster. The sequence is that of Monothiol glutaredoxin-S17 from Arabidopsis thaliana (Mouse-ear cress).